Consider the following 694-residue polypeptide: Transcription activator of gluconeogenesis PTRG_06536 (694 aa).

The interval 1–57 is disordered; sequence MTTPDAEDASPSPEYRSDQDDDMAAEQTTDRQSGDASPTQKPANGKPNAKDPLRPRR. A DNA-binding region (zn(2)-C6 fungal-type) is located at residues 64-92; that stretch reads CFACQRAHLTCGDERPCGRCIKRGLQDHC. 4 disordered regions span residues 175 to 216, 289 to 369, 384 to 420, and 539 to 569; these read FSNQ…FGPL, AMAF…GDNP, AQRSPLVSRPQQENRPPTTALQSIHANGIRKRQRDTK, and VNLGTNRESSESDTSTQNTTPNLSAQDSEGA. A compositionally biased stretch (polar residues) spans 193-204; the sequence is SVQNAGAPSTMS. The span at 205–214 shows a compositional bias: low complexity; that stretch reads QGQQGMQQFG. Polar residues predominate over residues 302 to 324; that stretch reads WQETQSRQGSMHVHTPNNTSGSG. Residues 349-363 show a composition bias toward low complexity; it reads ATHSTASPASTDAST. Positions 392 to 408 are enriched in polar residues; sequence RPQQENRPPTTALQSIH. A PAS domain is found at 485 to 559; sequence LQRHLMTLQE…SDTSTQNTTP (75 aa).

The protein belongs to the ERT1/acuK family.

It is found in the nucleus. In terms of biological role, transcription factor which regulates nonfermentable carbon utilization. Activator of gluconeogenetic genes. This Pyrenophora tritici-repentis (strain Pt-1C-BFP) (Wheat tan spot fungus) protein is Transcription activator of gluconeogenesis PTRG_06536.